Reading from the N-terminus, the 122-residue chain is Large ribosomal subunit protein uL14 (122 aa).

This sequence belongs to the universal ribosomal protein uL14 family. In terms of assembly, part of the 50S ribosomal subunit. Forms a cluster with proteins L3 and L19. In the 70S ribosome, L14 and L19 interact and together make contacts with the 16S rRNA in bridges B5 and B8.

Functionally, binds to 23S rRNA. Forms part of two intersubunit bridges in the 70S ribosome. This Chlamydia trachomatis serovar A (strain ATCC VR-571B / DSM 19440 / HAR-13) protein is Large ribosomal subunit protein uL14.